Here is a 572-residue protein sequence, read N- to C-terminus: Phosphoglucomutase-1 (572 aa).

Substrate contacts are provided by residues Thr23, Arg27, 126–127 (SH), and Lys140. The Phosphoserine intermediate role is filled by Ser126. Ser126 lines the Mg(2+) pocket. Residues Asp308, Asp310, and Asp312 each contribute to the Mg(2+) site. Substrate is bound by residues 312 to 313 (DR), Thr373, 392 to 394 (EES), Lys405, and Arg527.

Belongs to the phosphohexose mutase family. It depends on Mg(2+) as a cofactor. In terms of processing, phosphorylated via a calcium-dependent protein kinase. Very rapidly (within 80 ms) dephosphorylated during triggered trichocyst exocytosis. O-glycosylated with a short chain of mannose residues.

Its subcellular location is the cytoplasm. The catalysed reaction is alpha-D-glucose 1-phosphate = alpha-D-glucose 6-phosphate. Functionally, may be involved in membrane fusion in exocytosis. This Paramecium tetraurelia protein is Phosphoglucomutase-1 (pp63-1).